Consider the following 30-residue polypeptide: Photosystem I reaction center subunit XII (30 aa).

Residues 6-26 traverse the membrane as a helical segment; sequence VFTILAIALVPAVMALLLGSA.

It belongs to the PsaM family.

The protein localises to the cellular thylakoid membrane. This chain is Photosystem I reaction center subunit XII, found in Synechococcus sp. (strain JA-2-3B'a(2-13)) (Cyanobacteria bacterium Yellowstone B-Prime).